Here is a 169-residue protein sequence, read N- to C-terminus: Small ribosomal subunit protein uS5 (169 aa).

The region spanning 14–77 (LQEKVVEVRR…EDAKKNLIVV (64 aa)) is the S5 DRBM domain.

The protein belongs to the universal ribosomal protein uS5 family. In terms of assembly, part of the 30S ribosomal subunit. Contacts proteins S4 and S8.

Functionally, with S4 and S12 plays an important role in translational accuracy. Located at the back of the 30S subunit body where it stabilizes the conformation of the head with respect to the body. This Clostridioides difficile (strain 630) (Peptoclostridium difficile) protein is Small ribosomal subunit protein uS5.